The primary structure comprises 192 residues: Elongation factor P (192 aa).

The interval 133-157 is disordered; it reads EVTETTPGVKGDTAQGGDKPATLES.

It belongs to the elongation factor P family.

The protein localises to the cytoplasm. Its pathway is protein biosynthesis; polypeptide chain elongation. In terms of biological role, involved in peptide bond synthesis. Stimulates efficient translation and peptide-bond synthesis on native or reconstituted 70S ribosomes in vitro. Probably functions indirectly by altering the affinity of the ribosome for aminoacyl-tRNA, thus increasing their reactivity as acceptors for peptidyl transferase. The chain is Elongation factor P from Salinibacter ruber (strain DSM 13855 / M31).